A 2034-amino-acid polypeptide reads, in one-letter code: Host cell factor 1 (2034 aa).

The residue at position 2 (Ala-2) is an N-acetylalanine. Ser-6 is modified (phosphoserine). Kelch repeat units follow at residues 44-89, 93-140, 148-194, 217-265, and 266-313; these read LIVV…GFVC, RLLV…RLGH, KCYL…ITYG, KLVI…TIGN, and KMYV…LMDT. Residues Lys-105, Lys-163, and Lys-244 each participate in a glycyl lysine isopeptide (Lys-Gly) (interchain with G-Cter in ubiquitin) cross-link. Residue Lys-282 forms a Glycyl lysine isopeptide (Lys-Gly) (interchain with G-Cter in SUMO2) linkage. Lys-288 bears the N6-acetyllysine mark. Lys-363 is covalently cross-linked (Glycyl lysine isopeptide (Lys-Gly) (interchain with G-Cter in ubiquitin)). The 104-residue stretch at 366-469 folds into the Fibronectin type-III 1 domain; it reads PPARVQLVRA…TIQVLPTVPG (104 aa). Positions 407–434 are disordered; that stretch reads ATATSPTPNPVPSVPANPPKSPAPAAAA. Position 411 is a phosphoserine (Ser-411). The span at 413–428 shows a compositional bias: pro residues; it reads TPNPVPSVPANPPKSP. Positions 500–550 are required for interaction with OGT; it reads LVTMRPASQAGKAPVTVTSLPASVRMVVPTQSAQGTVIGSNPQMSGMAALA. Arg-504 and Arg-524 each carry omega-N-methylarginine. Phosphoserine occurs at positions 598, 666, and 669. Positions 610–722 are interaction with SIN3A; that stretch reads LKTAAAQVGT…KGPLPAGTIL (113 aa). The interaction with ZBTB17 stretch occupies residues 750-902; that stretch reads ILGISSVSPS…SLAGAGAHST (153 aa). N6-acetyllysine is present on Lys-813. Residues 813-912 are interaction with GABP2; it reads KIITAVPKIA…SASLATPITT (100 aa). 3 HCF repeat repeats span residues 1010–1035, 1072–1097, and 1101–1126; these read TLVCSNPPCETHETGTTNTATTTVVA, VRVCSNPPCETHETGTTNTATTATSN, and QHGCSNPPCETHETGTTSTATTAMSS. An HCF repeat 4; degenerate repeat occupies 1156 to 1182; that stretch reads RAQGTVKPPCQTQQTNMTSTTMTVQAT. Ser-1204 and Ser-1223 each carry phosphoserine. 4 disordered regions span residues 1221-1241, 1302-1374, 1444-1477, and 1491-1525; these read GPSSKDVPTGRQPETYHTYTT, PCET…TTST, TVTSNMSSNQDPPPAASDQGEVASTQGDSTNITS, and RAVTTVTQSTPVPGPSVPPPEELQVSPGPRQQLPP. HCF repeat repeat units follow at residues 1295-1320 and 1323-1348; these read TQVCSNPPCETHETGTTNTATTSNAG and QRVCSNPPCETHETGTTHTATTATSN. Over residues 1308 to 1321 the composition is skewed to low complexity; that stretch reads TGTTNTATTSNAGS. Residues 1358 to 1383 form an HCF repeat 7; degenerate repeat; that stretch reads QQPASGHPCETHQTTSTGTTMSVSVG. The HCF repeat 8 repeat unit spans residues 1423–1448; the sequence is QRVCSNPPCETHETGTTHTATTVTSN. The span at 1491-1501 shows a compositional bias: low complexity; the sequence is RAVTTVTQSTP. Position 1500 is a phosphothreonine (Thr-1500). Residues 1502 to 1511 show a composition bias toward pro residues; that stretch reads VPGPSVPPPE. Residues Ser-1506 and Ser-1516 each carry the phosphoserine modification. A coiled-coil region spans residues 1693–1723; it reads IVLTQQELAALVQQQQQLQEAQAQAQQQHHL. At Ser-1782 the chain carries Phosphoserine. Fibronectin type-III domains follow at residues 1808-1899 and 1901-2017; these read LPPP…TCLP and FPGA…TSKD. Glycyl lysine isopeptide (Lys-Gly) (interchain with G-Cter in ubiquitin) cross-links involve residues Lys-1818 and Lys-1819. Ser-1849 is subject to Phosphoserine. The disordered stretch occupies residues 2005–2034; the sequence is ATQVRWLQETSKDSSGTKPASKRPMSSPEM. N6-acetyllysine is present on Lys-2016.

In terms of assembly, composed predominantly of six polypeptides ranging from 110 to 150 kDa and a minor 300 kDa polypeptide. The majority of N- and C-terminal cleavage products remain tightly, albeit non-covalently, associated. Interacts with POU2F1, CREB3, ZBTB17, EGR2, E2F4, CREBZF, SP1, GABP2, Sin3 HDAC complex (SIN3A, HDAC1, HDAC2, SUDS3), SAP30, SIN3B and FHL2. Component of a MLL1 complex, composed of at least the core components KMT2A/MLL1, ASH2L, HCFC1, WDR5 and RBBP5, as well as the facultative components BACC1, CHD8, DPY30, E2F6, HCFC2, HSP70, INO80C, KANSL1, LAS1L, MAX, MCRS1, MEN1, MGA, KAT8, PELP1, PHF20, PRP31, RING2, RUVBL1, RUVBL2, SENP3, TAF1, TAF4, TAF6, TAF7, TAF9 and TEX10. Component of a THAP1/THAP3-HCFC1-OGT complex that is required for the regulation of the transcriptional activity of RRM1. Interacts directly with THAP3 (via its HBM). Interacts (via the Kelch-repeat domain) with THAP1 (via the HBM); the interaction recruits HCHC1 to the RRM1. Interacts with THAP7 and THAP11 (via the HMB). Interacts directly with OGT; the interaction, which requires the HCFC1 cleavage site domain, glycosylates and promotes the proteolytic processing of HCFC1, retains OGT in the nucleus and impacts the expression of herpes simplex virus immediate early viral genes. Component of the SET1 complex, at least composed of the catalytic subunit (SETD1A or SETD1B), WDR5, WDR82, RBBP5, ASH2L, CXXC1, HCFC1 and DPY30. Component of the NSL complex at least composed of MOF/KAT8, KANSL1, KANSL2, KANSL3, MCRS1, PHF20, OGT1/OGT, WDR5 and HCFC1. Component of a complex at least composed of ZNF335, HCFC1, CCAR2, EMSY, MKI67, RBBP5, ASH2L and WDR5; the complex is formed as a result of interactions between components of a nuclear receptor-mediated transcription complex and a histone methylation complex. Within the complex interacts with ZNF335. Interacts with TET2 and TET3. Interacts with HCFC1R1. Interacts with THAP11. Interacts (via Kelch domain) with KMT2E/MLL5 isoform 3 (via HBM motif). Interacts with E2F1. Accessory scaffold component of the polycomb repressive deubiquitinase (PR-DUB) complex, at least composed of BAP1, one of ASXL1, ASXL2 or (probably) ASXL3 and one of MBD5 or MBD6; the PR-DUB core associates with a number of accessory proteins, including FOXK1, FOXK2, KDM1B, HCFC1, YY1 and OGT. Interacts with YY1 (via Gly-rich region); the interaction is direct. Interacts with BAP1 (via HBM-like motif). Proteolytically cleaved at one or several PPCE--THET sites within the HCF repeats. Further cleavage of the primary N- and C-terminal chains results in a 'trimming' and accumulation of the smaller chains. Cleavage is promoted by O-glycosylation. Post-translationally, O-glycosylated. GlcNAcylation by OGT promotes proteolytic processing. In terms of processing, ubiquitinated. Lys-1818 and Lys-1819 are ubiquitinated both via 'Lys-48'- and 'Lys-63'-linked polyubiquitin chains. BAP1 mediated deubiquitination of 'Lys-48'-linked polyubiquitin chains; deubiquitination by BAP1 does not seem to stabilize the protein.

It localises to the cytoplasm. The protein localises to the nucleus. Transcriptional coregulator. Serves as a scaffold protein, bridging interactions between transcription factors, including THAP11 and ZNF143, and transcriptional coregulators. Involved in control of the cell cycle. Also antagonizes transactivation by ZBTB17 and GABP2; represses ZBTB17 activation of the p15(INK4b) promoter and inhibits its ability to recruit p300. Coactivator for EGR2 and GABP2. Tethers the chromatin modifying Set1/Ash2 histone H3 'Lys-4' methyltransferase (H3K4me) and Sin3 histone deacetylase (HDAC) complexes (involved in the activation and repression of transcription, respectively) together. Component of a THAP1/THAP3-HCFC1-OGT complex that is required for the regulation of the transcriptional activity of RRM1. As part of the NSL complex it may be involved in acetylation of nucleosomal histone H4 on several lysine residues. Recruits KMT2E/MLL5 to E2F1 responsive promoters promoting transcriptional activation and thereby facilitates G1 to S phase transition. Modulates expression of homeobox protein PDX1, perhaps acting in concert with transcription factor E2F1, thereby regulating pancreatic beta-cell growth and glucose-stimulated insulin secretion. May negatively modulate transcriptional activity of FOXO3. This is Host cell factor 1 from Rattus norvegicus (Rat).